Consider the following 135-residue polypeptide: Transcriptional activator protein (135 aa).

The Nuclear localization signal signature appears at 17-32; sequence KAQHKVAKKRAIRRSR. A zinc finger lies at 37-54; sequence CGCSYYIHINCRNYGFSH. A disordered region spans residues 82–102; it reads AAPSNSSRVPDVCDPNTDNVQ. The interval 120 to 135 is transactivation; it reads ALPLFDGDFWDDIIDF.

This sequence belongs to the geminiviridae transcriptional activator protein family. In terms of assembly, monomer. Homodimer. Homooligomer. Self-interaction correlates with nuclear localization and efficient activation of transcription. Monomers suppress local silencing by interacting with and inactivating host adenosine kinase 2 (ADK2) in the cytoplasm. Interacts with and inhibits host SNF1 kinase. Binds to ssDNA. Post-translationally, phosphorylated.

The protein resides in the host nucleus. Its subcellular location is the host cytoplasm. Strong activator of the late viral genes promoters. Enhances the expression of the capsid protein and nuclear shuttle protein. Acts as a suppressor of RNA-mediated gene silencing, also known as post-transcriptional gene silencing (PTGS), a mechanism of plant viral defense that limits the accumulation of viral RNAs. Suppresses the host RNA silencing by inhibiting adenosine kinase 2 (ADK2), a kinase involved in a general methylation pathway. Also suppresses the host basal defense by interacting with and inhibiting SNF1 kinase, a key regulator of cell metabolism implicated in innate antiviral defense. Determines pathogenicity. In Mungbean yellow mosaic virus (strain Vigna) (MYMV), this protein is Transcriptional activator protein.